We begin with the raw amino-acid sequence, 345 residues long: Ananain (345 aa).

Positions Met1–Ala24 are cleaved as a signal peptide. The propeptide at Ser25–Ser122 is activation peptide. 3 disulfide bridges follow: Cys144–Cys184, Cys178–Cys217, and Cys273–Cys325. Residue Cys147 is part of the active site. Position 147 (Cys147) interacts with E64. Active-site residues include His279 and Asn300.

Stem (at protein level).

The enzyme catalyses Hydrolysis of proteins with broad specificity for peptide bonds. Best reported small molecule substrate Bz-Phe-Val-Arg-|-NHMec, but broader specificity than fruit bromelain.. With respect to regulation, strongly inhibited by chicken egg-white cystatin. Inhibited by iodoacetamide and the active-site-directed inhibitor E64 (L-trans-epoxysuccinyl-leucylamide-(4-guanido)-butane). In terms of biological role, cysteine protease. Displays a high level of diversity in substrate specificity at the P1-P1' cleavage site. A hydrophilic P1 residue is preferred, with Gln or Arg strongly preferred. Favors an Ile/Leu residue at the P2 position of substrates, with an overall higher preference for Leu. The optimal tripeptide for cleavage is Pro-Leu-Gln, with cleavage occurring after the Gln residue. Another optimal tripeptide is Val-Leu-Arg, which may imply that a hydrophobic residue at the P3 position of substrates is preferred. This Ananas comosus (Pineapple) protein is Ananain.